A 355-amino-acid chain; its full sequence is Uroporphyrinogen decarboxylase (355 aa).

Substrate contacts are provided by residues 27–31 (RQAGR), Asp78, Tyr155, Ser210, and His328.

Belongs to the uroporphyrinogen decarboxylase family. In terms of assembly, homodimer.

It is found in the cytoplasm. The catalysed reaction is uroporphyrinogen III + 4 H(+) = coproporphyrinogen III + 4 CO2. It functions in the pathway porphyrin-containing compound metabolism; protoporphyrin-IX biosynthesis; coproporphyrinogen-III from 5-aminolevulinate: step 4/4. Functionally, catalyzes the decarboxylation of four acetate groups of uroporphyrinogen-III to yield coproporphyrinogen-III. The sequence is that of Uroporphyrinogen decarboxylase from Pseudomonas aeruginosa (strain LESB58).